Here is a 749-residue protein sequence, read N- to C-terminus: 5-methyltetrahydropteroyltriglutamate--homocysteine methyltransferase (749 aa).

Residues 15–18 (RELK) and Lys-114 contribute to the 5-methyltetrahydropteroyltri-L-glutamate site. Residues 425–427 (IGS) and Glu-478 each bind L-homocysteine. L-methionine contacts are provided by residues 425–427 (IGS) and Glu-478. Position 555 (Trp-555) interacts with 5-methyltetrahydropteroyltri-L-glutamate. Asp-593 provides a ligand contact to L-homocysteine. Asp-593 contacts L-methionine. Glu-599 provides a ligand contact to 5-methyltetrahydropteroyltri-L-glutamate. 3 residues coordinate Zn(2+): His-636, Cys-638, and Glu-660. The active-site Proton donor is His-689. Cys-721 contacts Zn(2+).

Belongs to the vitamin-B12 independent methionine synthase family. The cofactor is Zn(2+).

It carries out the reaction 5-methyltetrahydropteroyltri-L-glutamate + L-homocysteine = tetrahydropteroyltri-L-glutamate + L-methionine. The protein operates within amino-acid biosynthesis; L-methionine biosynthesis via de novo pathway; L-methionine from L-homocysteine (MetE route): step 1/1. In terms of biological role, catalyzes the transfer of a methyl group from 5-methyltetrahydrofolate to homocysteine resulting in methionine formation. The chain is 5-methyltetrahydropteroyltriglutamate--homocysteine methyltransferase from Streptococcus pneumoniae serotype 19F (strain G54).